A 618-amino-acid polypeptide reads, in one-letter code: MILQNKTFDLNPNDIAGLELVCQTLRERILEVVSANGGHLSSSLGAVELIVGMHALFDCQKNPFIFDTSHQAYAHKLLTGRFESFSTLRQFKGLSGFTKPSESAYDYFIAGHSSTSVSIGVGVAKAFCLKQALGMPIALLGDGSISAGIFYEALNELGDRKYPMIMILNDNEMSISTPIGALSKALSQLMKGPFYQSFRSKVKKILSTLPESVNYLASRFEESFKLITPGVFFEELGINYIGPINGHDLSAIIETLKLAKELKEPVLIHAQTLKGKGYKIAEGRYEKWHGVGPFDLDTGLSKKSKSTILSPTEAYSNTLLELAKKDEKIVGVTAAMPSGTGLDKLIDAYPLRFFDVAIAEQHALTSSSAMAKEGFKPFVSIYSTFLQRAYDSIVHDACISSLPIKLAIDRAGIVGEDGETHQGLLDVSYLRSIPNMVIFAPRDNETLKNAVRFANEHDSSPCAFRYPRGSFALKEGVFEPSGFVLGRSELLKKEGEILLIGYGNGVGRAHLVQLALKEKNIECALLDLRFLKPLDPNLSAIIAPYQKLYVFSDNYKLGGVASAILEFLSEQNILKPVKSFEIMDEFIMHGNTALVEKSLGLDTESLTDAILKDLGQER.

Residues histidine 70 and 111-113 each bind thiamine diphosphate; that span reads GHS. Aspartate 142 lines the Mg(2+) pocket. Residues 143 to 144, asparagine 171, tyrosine 278, and glutamate 360 contribute to the thiamine diphosphate site; that span reads GS. Asparagine 171 contributes to the Mg(2+) binding site.

Belongs to the transketolase family. DXPS subfamily. As to quaternary structure, homodimer. Mg(2+) serves as cofactor. It depends on thiamine diphosphate as a cofactor.

The enzyme catalyses D-glyceraldehyde 3-phosphate + pyruvate + H(+) = 1-deoxy-D-xylulose 5-phosphate + CO2. The protein operates within metabolic intermediate biosynthesis; 1-deoxy-D-xylulose 5-phosphate biosynthesis; 1-deoxy-D-xylulose 5-phosphate from D-glyceraldehyde 3-phosphate and pyruvate: step 1/1. Catalyzes the acyloin condensation reaction between C atoms 2 and 3 of pyruvate and glyceraldehyde 3-phosphate to yield 1-deoxy-D-xylulose-5-phosphate (DXP). The polypeptide is 1-deoxy-D-xylulose-5-phosphate synthase (Helicobacter pylori (strain HPAG1)).